The sequence spans 416 residues: Formyl-CoA:oxalate CoA-transferase (416 aa).

CoA contacts are provided by residues 17-18 (QS), Arg-38, 72-75 (LNTK), 96-98 (NFH), His-104, and 137-140 (KAYE). Asp-169 functions as the Nucleophile in the catalytic mechanism. Substrate is bound at residue 248–250 (GGQ). CoA is bound at residue 273–275 (QEQ).

Belongs to the CoA-transferase III family. Frc subfamily. In terms of assembly, homodimer.

It catalyses the reaction formyl-CoA + oxalate = oxalyl-CoA + formate. It participates in metabolic intermediate degradation; oxalate degradation; CO(2) and formate from oxalate: step 1/2. In terms of biological role, involved in the catabolism of oxalate and in the adapatation to low pH via the induction of the oxalate-dependent acid tolerance response (ATR). Catalyzes the transfer of the CoA moiety from formyl-CoA to oxalate. The polypeptide is Formyl-CoA:oxalate CoA-transferase (Shigella boydii serotype 18 (strain CDC 3083-94 / BS512)).